The sequence spans 109 residues: Encapsulin nanocompartment cargo protein EncD (109 aa).

A Fe cation-binding site is contributed by glutamate 47. Residues 61-94 are disordered; the sequence is AGGRGAAAPTPAREAPAEAPRLARGSADELHEAA. Residues 66 to 85 show a composition bias toward low complexity; the sequence is AAAPTPAREAPAEAPRLARG. Positions 100–106 are probable targeting peptide; sequence LTVGSLR.

It localises to the encapsulin nanocompartment. Cargo protein of a type 1 encapsulin nanocompartment. May help nucleate Fe atoms in the interior of the encapsulin nanocompartment. Present in about 47 copies/encapsulin nanocompartment. The protein is Encapsulin nanocompartment cargo protein EncD of Myxococcus xanthus (strain DK1622).